Reading from the N-terminus, the 463-residue chain is D(2)-like dopamine receptor (463 aa).

Topologically, residues 1–35 (MDVFTQYAYNDSIFDNGTWSANETTKDETHPYNYY) are extracellular. 3 N-linked (GlcNAc...) asparagine glycosylation sites follow: Asn-10, Asn-16, and Asn-22. A helical transmembrane segment spans residues 36 to 58 (AMLLTLLIFVIVFGNVLVCMAVS). Over 59-68 (REKALQTTTN) the chain is Cytoplasmic. Residues 69–91 (YLIVSLAVADLLVATLVMPWVVY) form a helical membrane-spanning segment. At 92 to 106 (LEVVGEWRFSKIHCD) the chain is on the extracellular side. A disulfide bridge links Cys-105 with Cys-183. A helical transmembrane segment spans residues 107–128 (IFVTLDVMMCTASILNLCAISI). Over 129 to 149 (DRYTAVAMPMLYNTRYSSRRR) the chain is Cytoplasmic. The chain crosses the membrane as a helical span at residues 150–170 (VTVMISVVWVLSFAISCPLLF). The Extracellular segment spans residues 171–189 (GLNNTATRDQSLCFIANPA). A helical membrane pass occupies residues 190 to 214 (FVVYSSIVSFYVPFIVTLLVYVQIY). Residues 215–392 (VVLRKRRKRV…SQQKEKKATQ (178 aa)) lie on the Cytoplasmic side of the membrane. Positions 295–362 (CGGSHKQPPP…KEAQGNPAPV (68 aa)) are disordered. Over residues 315 to 329 (PATSHQLLMSTKANA) the composition is skewed to polar residues. Positions 341-353 (EGQRTEKNGDPTK) are enriched in basic and acidic residues. A helical transmembrane segment spans residues 393 to 414 (MLAIVLGVFIICWLPFFITHIL). The Extracellular segment spans residues 415 to 429 (NTHCTRCKVPAEMYN). A disulfide bond links Cys-418 and Cys-421. A helical membrane pass occupies residues 430–451 (AFTWLGYVNSAVNPIIYTTFNV). The Cytoplasmic portion of the chain corresponds to 452–463 (EFRKAFIKILHC).

The protein belongs to the G-protein coupled receptor 1 family.

It localises to the cell membrane. Functionally, receptor for dopamine. This is D(2)-like dopamine receptor (d215) from Takifugu rubripes (Japanese pufferfish).